Reading from the N-terminus, the 257-residue chain is Deoxyribose-phosphate aldolase (257 aa).

Aspartate 102 acts as the Proton donor/acceptor in catalysis. The Schiff-base intermediate with acetaldehyde role is filled by lysine 166. Residue lysine 198 is the Proton donor/acceptor of the active site.

It belongs to the DeoC/FbaB aldolase family. DeoC type 2 subfamily.

It is found in the cytoplasm. The catalysed reaction is 2-deoxy-D-ribose 5-phosphate = D-glyceraldehyde 3-phosphate + acetaldehyde. It participates in carbohydrate degradation; 2-deoxy-D-ribose 1-phosphate degradation; D-glyceraldehyde 3-phosphate and acetaldehyde from 2-deoxy-alpha-D-ribose 1-phosphate: step 2/2. Its function is as follows. Catalyzes a reversible aldol reaction between acetaldehyde and D-glyceraldehyde 3-phosphate to generate 2-deoxy-D-ribose 5-phosphate. The protein is Deoxyribose-phosphate aldolase of Shewanella sediminis (strain HAW-EB3).